The following is a 360-amino-acid chain: Phenylalanine--tRNA ligase alpha subunit (360 aa).

E260 provides a ligand contact to Mg(2+).

It belongs to the class-II aminoacyl-tRNA synthetase family. Phe-tRNA synthetase alpha subunit type 1 subfamily. In terms of assembly, tetramer of two alpha and two beta subunits. It depends on Mg(2+) as a cofactor.

It localises to the cytoplasm. It catalyses the reaction tRNA(Phe) + L-phenylalanine + ATP = L-phenylalanyl-tRNA(Phe) + AMP + diphosphate + H(+). The polypeptide is Phenylalanine--tRNA ligase alpha subunit (Beijerinckia indica subsp. indica (strain ATCC 9039 / DSM 1715 / NCIMB 8712)).